The sequence spans 741 residues: Catalase-peroxidase 2 (741 aa).

The signal sequence occupies residues 1–28 (MQRNRIAKSVLAALAVIAMSAGSISARA). The segment at residues 107–228 (WHGAGTYRTY…LAATQMGLIY (122 aa)) is a cross-link (tryptophyl-tyrosyl-methioninium (Trp-Tyr) (with M-254)). The active-site Proton acceptor is the H108. The tryptophyl-tyrosyl-methioninium (Tyr-Met) (with W-107) cross-link spans 228 to 254 (YVNPEGPNGNPDPVAAAQDIREAFGRM). Position 269 (H269) interacts with heme b.

Belongs to the peroxidase family. Peroxidase/catalase subfamily. Homodimer or homotetramer. Heme b is required as a cofactor. In terms of processing, formation of the three residue Trp-Tyr-Met cross-link is important for the catalase, but not the peroxidase activity of the enzyme.

The catalysed reaction is H2O2 + AH2 = A + 2 H2O. The enzyme catalyses 2 H2O2 = O2 + 2 H2O. Its function is as follows. Bifunctional enzyme with both catalase and broad-spectrum peroxidase activity. The sequence is that of Catalase-peroxidase 2 from Burkholderia vietnamiensis (strain G4 / LMG 22486) (Burkholderia cepacia (strain R1808)).